The sequence spans 166 residues: uncharacterized protein (166 aa).

Gly residues-rich tracts occupy residues 1 to 10 (MNYGNNGGGQ) and 76 to 86 (YRGGGGGGGGN). A disordered region spans residues 1 to 117 (MNYGNNGGGQ…GGGNKNFGPI (117 aa)).

This is an uncharacterized protein from Caenorhabditis elegans.